The following is a 731-amino-acid chain: Autophagy-related protein 20 (731 aa).

Positions 1-22 are enriched in polar residues; sequence MSSVLRNQDNPPTISEVSSTTK. A disordered region spans residues 1–130; it reads MSSVLRNQDN…NNKSNNVSRV (130 aa). Over residues 31–41 the composition is skewed to basic and acidic residues; the sequence is KQEEKEKEKEI. The span at 69–82 shows a compositional bias: polar residues; the sequence is SFMTANSFNEGPNT. Low complexity-rich tracts occupy residues 92–102 and 113–128; these read NNNSSSNNNRG and LLLY…NNVS. The region spanning 164 to 340 is the PX domain; sequence IQITEAGNSN…KFLDPNANWG (177 aa). Arg-205, Ser-207, and Lys-231 together coordinate a 1,2-diacyl-sn-glycero-3-phospho-(1D-myo-inositol-3-phosphate). The interval 253 to 277 is disordered; it reads SVAGSNGNSGGSGGGGASGGAGSGS. The segment covering 259–277 has biased composition (gly residues); the sequence is GNSGGSGGGGASGGAGSGS. Arg-306 provides a ligand contact to a 1,2-diacyl-sn-glycero-3-phospho-(1D-myo-inositol-3-phosphate). The disordered stretch occupies residues 586–626; the sequence is NSQVKPKNGKYNLEQQQSSTVSPAPPPGPPPSSSSSSSSSS. Over residues 608–617 the composition is skewed to pro residues; sequence PAPPPGPPPS.

It belongs to the sorting nexin family.

Its subcellular location is the endosome membrane. The protein resides in the preautophagosomal structure membrane. Required for cytoplasm to vacuole transport (Cvt), pexophagy and mitophagy. Also involved in endoplasmic reticulum-specific autophagic process and is essential for the survival of cells subjected to severe ER stress. Functions in protein retrieval from the endocytic pathway. The protein is Autophagy-related protein 20 (ATG20) of Candida albicans (strain SC5314 / ATCC MYA-2876) (Yeast).